The primary structure comprises 291 residues: Prolyl 4-hydroxylase 5 (291 aa).

At 1 to 22 the chain is on the cytoplasmic side; sequence MASKSKQHLRYQPRKSVSRSTQ. A helical; Signal-anchor for type II membrane protein transmembrane segment spans residues 23–43; that stretch reads AFTVLILLLVVILILLGLGIL. Over 44–291 the chain is Extracellular; it reads SLPNANRNSS…KWFHVHEFKV (248 aa). Residue N51 is glycosylated (N-linked (GlcNAc...) asparagine). One can recognise a Fe2OG dioxygenase domain in the interval 163–286; that stretch reads NGEGLQVLHY…KWSSTKWFHV (124 aa). H181 and D183 together coordinate Fe cation. Residue N222 is glycosylated (N-linked (GlcNAc...) asparagine). A Fe cation-binding site is contributed by H267. K277 is a 2-oxoglutarate binding site.

The protein belongs to the P4HA family. Requires Fe(2+) as cofactor. The cofactor is L-ascorbate. Expressed in epidermal root hair cells (trichoblasts).

The protein resides in the endoplasmic reticulum membrane. It localises to the golgi apparatus membrane. The catalysed reaction is L-prolyl-[collagen] + 2-oxoglutarate + O2 = trans-4-hydroxy-L-prolyl-[collagen] + succinate + CO2. Catalyzes the post-translational formation of 4-hydroxyproline in -Xaa-Pro-Gly- sequences in proline-rich peptide sequences of plant glycoproteins and other proteins. Hydroxyprolines are important constituent of many plant cell wall glycoproteins such as extensins, hydroxyproline-rich glycoproteins, lectins and arabinogalactan proteins. Possesses high affinity for leucine-rich repeat and proline-rich extensins of root cell walls that are essential for root hair development. Hydroxyprolines define the subsequent O-glycosylation sites by arabinosyltransferases which elongate the O-arabinosides on extensins. The polypeptide is Prolyl 4-hydroxylase 5 (Arabidopsis thaliana (Mouse-ear cress)).